A 282-amino-acid chain; its full sequence is Undecaprenyl-diphosphatase (282 aa).

The next 7 membrane-spanning stretches (helical) occupy residues 45 to 65 (AFME…VVFI), 86 to 106 (WQLW…GIPL), 114 to 134 (FHNF…FILI), 151 to 171 (LPYK…FPGT), 196 to 216 (FFLG…KFIL), 224 to 244 (GQLT…MYVI), and 256 to 276 (FTVF…YWVF).

This sequence belongs to the UppP family.

Its subcellular location is the cell membrane. It carries out the reaction di-trans,octa-cis-undecaprenyl diphosphate + H2O = di-trans,octa-cis-undecaprenyl phosphate + phosphate + H(+). In terms of biological role, catalyzes the dephosphorylation of undecaprenyl diphosphate (UPP). Confers resistance to bacitracin. This Streptococcus gordonii (strain Challis / ATCC 35105 / BCRC 15272 / CH1 / DL1 / V288) protein is Undecaprenyl-diphosphatase.